A 155-amino-acid chain; its full sequence is Cyanate hydratase (155 aa).

Residues arginine 95, glutamate 98, and serine 121 contribute to the active site.

Belongs to the cyanase family.

The enzyme catalyses cyanate + hydrogencarbonate + 3 H(+) = NH4(+) + 2 CO2. Catalyzes the reaction of cyanate with bicarbonate to produce ammonia and carbon dioxide. This chain is Cyanate hydratase, found in Pseudomonas savastanoi pv. phaseolicola (strain 1448A / Race 6) (Pseudomonas syringae pv. phaseolicola (strain 1448A / Race 6)).